Consider the following 107-residue polypeptide: Neuroparsin-A (107 aa).

The signal sequence occupies residues 1 to 22 (MKATAALVAATLLLAVTLFHRA). Residues 23–24 (ER) constitute a propeptide that is removed on maturation.

In terms of assembly, homodimer; disulfide-linked.

Neurosparins are multifunctional neurohormones: they inhibit the effects of juvenile hormone, stimulate fluid reabsorption of isolated recta and induces an increase in hemolymph lipid and trehalose levels. In Locusta migratoria (Migratory locust), this protein is Neuroparsin-A.